Reading from the N-terminus, the 894-residue chain is Alpha-actinin-2 (894 aa).

The actin-binding stretch occupies residues 1–254 (MNQIEPGVQY…IMTYVSCFYH (254 aa)). Calponin-homology (CH) domains lie at 38-142 (KQQR…LRFA) and 151-257 (TSAK…HAFA). Position 237 is a phosphothreonine (Thr237). Spectrin repeat units follow at residues 281 to 391 (RLME…WLLN), 401 to 506 (HLAE…ALER), 516 to 627 (QLHL…SLQE), and 637 to 740 (RLRR…EVET). EF-hand domains are found at residues 753 to 788 (EQMN…MGYD) and 789 to 824 (LGEA…ETAD). Ca(2+) is bound by residues Asp766, Asn770, Asp777, Asp802, Asn804, and Thr808.

Belongs to the alpha-actinin family. As to quaternary structure, homodimer; antiparallel. Also forms heterodimers with ACTN3. Interacts with ADAM12, MYOZ1, MYOZ2 and MYOZ3. Interacts via its C-terminal region with the LDB3 PDZ domain. Interacts with XIRP2. Interacts with DST (via N-terminus). Interacts with PARVB. Interacts with SYNPO2. In terms of processing, ubiquitinated by FBXL22, leading to proteasomal degradation.

It localises to the cytoplasm. It is found in the myofibril. The protein localises to the sarcomere. Its subcellular location is the z line. F-actin cross-linking protein which is thought to anchor actin to a variety of intracellular structures. This is a bundling protein. The protein is Alpha-actinin-2 (ACTN2) of Bos taurus (Bovine).